The following is a 481-amino-acid chain: Aromatic amino acid aminotransferase DDB_G0272014 (481 aa).

Lysine 300 carries the post-translational modification N6-(pyridoxal phosphate)lysine.

It belongs to the class-I pyridoxal-phosphate-dependent aminotransferase family. The cofactor is pyridoxal 5'-phosphate.

It localises to the cytoplasm. It carries out the reaction an aromatic L-alpha-amino acid + 2-oxoglutarate = an aromatic oxo-acid + L-glutamate. In terms of biological role, has aromatic amino acid transaminase activity. In Dictyostelium discoideum (Social amoeba), this protein is Aromatic amino acid aminotransferase DDB_G0272014.